The primary structure comprises 317 residues: Exopolysaccharide production protein ExoZ (317 aa).

7 consecutive transmembrane segments (helical) span residues 14–34 (TIGA…MWVI), 53–73 (IVPV…AGLF), 100–120 (IWPV…YAVF), 132–152 (LPVV…VAFD), 185–205 (LAVG…IGVL), 206–226 (GLPF…IGVL), and 268–288 (IGLG…LIGI).

The protein belongs to the acyltransferase 3 family.

It is found in the cell membrane. Required for the acetyl modification of the third sugar (glucose) of the octasaccharide subunit of succinoglycan (EPS I). The chain is Exopolysaccharide production protein ExoZ (exoZ) from Rhizobium meliloti (strain 1021) (Ensifer meliloti).